A 933-amino-acid polypeptide reads, in one-letter code: Bifunctional uridylyltransferase/uridylyl-removing enzyme (933 aa).

The tract at residues 1-379 (MAKISLKLDE…TFQRRKRKLA (379 aa)) is uridylyltransferase. Residues 380-736 (GTSDFIVDNH…VKTHQFEAVT (357 aa)) form a uridylyl-removing region. In terms of domain architecture, HD spans 496–619 (VDEHLIRCIG…VQSVERLKLL (124 aa)). ACT domains are found at residues 737–818 (EITV…EMIE) and 848–922 (VIEV…GIAP).

The protein belongs to the GlnD family. Mg(2+) is required as a cofactor.

The catalysed reaction is [protein-PII]-L-tyrosine + UTP = [protein-PII]-uridylyl-L-tyrosine + diphosphate. It carries out the reaction [protein-PII]-uridylyl-L-tyrosine + H2O = [protein-PII]-L-tyrosine + UMP + H(+). Its activity is regulated as follows. Uridylyltransferase (UTase) activity is inhibited by glutamine, while glutamine activates uridylyl-removing (UR) activity. In terms of biological role, modifies, by uridylylation and deuridylylation, the PII regulatory proteins (GlnB and homologs), in response to the nitrogen status of the cell that GlnD senses through the glutamine level. Under low glutamine levels, catalyzes the conversion of the PII proteins and UTP to PII-UMP and PPi, while under higher glutamine levels, GlnD hydrolyzes PII-UMP to PII and UMP (deuridylylation). Thus, controls uridylylation state and activity of the PII proteins, and plays an important role in the regulation of nitrogen fixation and metabolism. This Mesorhizobium japonicum (strain LMG 29417 / CECT 9101 / MAFF 303099) (Mesorhizobium loti (strain MAFF 303099)) protein is Bifunctional uridylyltransferase/uridylyl-removing enzyme.